The sequence spans 143 residues: Large ribosomal subunit protein uL11 (143 aa).

Belongs to the universal ribosomal protein uL11 family. In terms of assembly, part of the ribosomal stalk of the 50S ribosomal subunit. Interacts with L10 and the large rRNA to form the base of the stalk. L10 forms an elongated spine to which L12 dimers bind in a sequential fashion forming a multimeric L10(L12)X complex. Post-translationally, one or more lysine residues are methylated.

Forms part of the ribosomal stalk which helps the ribosome interact with GTP-bound translation factors. The protein is Large ribosomal subunit protein uL11 of Paenarthrobacter aurescens (strain TC1).